The chain runs to 206 residues: MPKVALYNINGEQVGEVELKDEVFGIEPHEHVMHEAVNMQLANQRQGTHDTKTRAEVRGGGRKPWRQKGTGRARAGSSRSPIWRKGGIVFGPHPRDYAISLPKKVRRLALKSALSSKVLDQNIIVLDSLTMDAPKTKDMVRILGNLKADKALVVTATRDLNVEKSARNIEGVKPLKADGVNVYDLLKYTKLVITKDAVAKIEEVLA.

A disordered region spans residues 43-78 (NQRQGTHDTKTRAEVRGGGRKPWRQKGTGRARAGSS). The segment covering 47–59 (GTHDTKTRAEVRG) has biased composition (basic and acidic residues). Basic residues predominate over residues 60 to 71 (GGRKPWRQKGTG).

This sequence belongs to the universal ribosomal protein uL4 family. As to quaternary structure, part of the 50S ribosomal subunit.

Its function is as follows. One of the primary rRNA binding proteins, this protein initially binds near the 5'-end of the 23S rRNA. It is important during the early stages of 50S assembly. It makes multiple contacts with different domains of the 23S rRNA in the assembled 50S subunit and ribosome. Functionally, forms part of the polypeptide exit tunnel. The polypeptide is Large ribosomal subunit protein uL4 (Desulforamulus reducens (strain ATCC BAA-1160 / DSM 100696 / MI-1) (Desulfotomaculum reducens)).